Reading from the N-terminus, the 175-residue chain is Translation initiation factor IF-3, chloroplastic (175 aa).

This sequence belongs to the IF-3 family. In terms of assembly, monomer.

It is found in the plastid. The protein resides in the chloroplast. In terms of biological role, IF-3 binds to the 30S ribosomal subunit and shifts the equilibrium between 70S ribosomes and their 50S and 30S subunits in favor of the free subunits, thus enhancing the availability of 30S subunits on which protein synthesis initiation begins. This is Translation initiation factor IF-3, chloroplastic from Cyanidioschyzon merolae (strain NIES-3377 / 10D) (Unicellular red alga).